We begin with the raw amino-acid sequence, 98 residues long: Cystatin-A (98 aa).

M1 is subject to N-acetylmethionine. The short motif at 46 to 50 (QVVAG) is the Secondary area of contact element.

Belongs to the cystatin family. In terms of tissue distribution, expressed in the skin throughout the epidermis.

Its subcellular location is the cytoplasm. This is an intracellular thiol proteinase inhibitor. Has an important role in desmosome-mediated cell-cell adhesion in the lower levels of the epidermis. The protein is Cystatin-A (CSTA) of Homo sapiens (Human).